We begin with the raw amino-acid sequence, 190 residues long: Photosynthetic NDH subunit of lumenal location 2, chloroplastic (190 aa).

The N-terminal 31 residues, 1–31 (MSSFTTTNTPPPYLLRKIYHRRVNQPFSVVC), are a transit peptide targeting the chloroplast. The transit peptide at 32 to 68 (CTGEPQQDIFTRRRTLTSLITFTVIGGATSSALAQEK) directs the protein to the thylakoid. 2 coiled-coil regions span residues 87-107 (EDAAARIKQTAEGLRDMREML) and 139-159 (ESRRNDYVQAANELVENMSEL).

It belongs to the PsbQ family. In terms of assembly, part of the chloroplast NDH complex, composed of a mixture of chloroplast and nucleus encoded subunits. Component of the NDH lumenal subcomplex, at least composed of PnsL1, PnsL2, PnsL3, PnsL4 and PnsL5.

It localises to the plastid. It is found in the chloroplast thylakoid membrane. Functionally, NDH shuttles electrons from NAD(P)H:plastoquinone, via FMN and iron-sulfur (Fe-S) centers, to quinones in the photosynthetic chain and possibly in a chloroplast respiratory chain. The immediate electron acceptor for the enzyme in this species is believed to be plastoquinone. Couples the redox reaction to proton translocation, and thus conserves the redox energy in a proton gradient. Required for both formation and activity of the chloroplast NAD(P)H dehydrogenase (NDH) complex. This is Photosynthetic NDH subunit of lumenal location 2, chloroplastic from Arabidopsis thaliana (Mouse-ear cress).